The chain runs to 266 residues: Undecaprenyl-diphosphatase (266 aa).

7 helical membrane-spanning segments follow: residues 41 to 61 (NLAF…VILW), 82 to 102 (YVIN…FFKD), 106 to 126 (AIFG…AALL), 140 to 160 (ISMK…LPGL), 180 to 200 (LAQF…LLDG), 213 to 233 (IPTL…CLAC), and 245 to 265 (LIYF…VSQL).

This sequence belongs to the UppP family.

The protein resides in the cell inner membrane. The enzyme catalyses di-trans,octa-cis-undecaprenyl diphosphate + H2O = di-trans,octa-cis-undecaprenyl phosphate + phosphate + H(+). Catalyzes the dephosphorylation of undecaprenyl diphosphate (UPP). Confers resistance to bacitracin. The polypeptide is Undecaprenyl-diphosphatase (Bacteroides fragilis (strain YCH46)).